The following is a 555-amino-acid chain: Sulfite reductase [ferredoxin] (555 aa).

The interval 1–22 is disordered; the sequence is MTTARPAKARNEGQWALGHREP. The 3'-(S-cysteinyl)-tyrosine (Tyr-Cys) cross-link spans 69–161; sequence YTQREQGYDG…DVGLQTTEAC (93 aa). [4Fe-4S] cluster contacts are provided by Cys-417, Cys-423, Cys-463, and Cys-467. A siroheme-binding site is contributed by Cys-467.

It belongs to the nitrite and sulfite reductase 4Fe-4S domain family. Monomer. It depends on siroheme as a cofactor. [4Fe-4S] cluster serves as cofactor.

The catalysed reaction is hydrogen sulfide + 6 oxidized [2Fe-2S]-[ferredoxin] + 3 H2O = sulfite + 6 reduced [2Fe-2S]-[ferredoxin] + 7 H(+). In terms of biological role, catalyzes the reduction of sulfite to sulfide, a step in the biosynthesis of sulfur-containing amino acids and cofactors. This is Sulfite reductase [ferredoxin] (sir) from Mycobacterium bovis (strain ATCC BAA-935 / AF2122/97).